We begin with the raw amino-acid sequence, 359 residues long: Peptide chain release factor 1 (359 aa).

An N5-methylglutamine modification is found at Gln236.

This sequence belongs to the prokaryotic/mitochondrial release factor family. Post-translationally, methylated by PrmC. Methylation increases the termination efficiency of RF1.

The protein resides in the cytoplasm. Peptide chain release factor 1 directs the termination of translation in response to the peptide chain termination codons UAG and UAA. The chain is Peptide chain release factor 1 from Streptococcus pyogenes serotype M1.